We begin with the raw amino-acid sequence, 412 residues long: MKIRTLSGSVLEPPSAVRATPGTSMLKLEPGGSTIPKIPFIRPSFPGPAELAEDFVQIAQANWYTNFGPNERRFARALRDYLGPHLHVATLANGTLALLAALHVSFGAGTRDRYLLMPSFTFVGVAQAALWTGYRPWFIDIDANTWQPCVHSARAVIERFRDRIAGILLANVFGVGNPQISVWEELAAEWELPIVLDSAAGFGSTYADGERLGGRGACEIFSFHATKPFAVGEGGALVSRDPRLVEHAYKFQNFGLVQTRESIQLGMNGKLSEISAAIGLRQLVGLDRRLASRRKVLECYRTGMADAGVRFQDNANVASLCFASACCTSADHKAAVLGSLRRHAIEARDYYNPPQHRHPYFVTNAELVESTDLAVTADICSRIVSLPVHDHMAPDDVARVVAAVQEAEVRGE.

An N6-(pyridoxal phosphate)lysine modification is found at K227.

Belongs to the DegT/DnrJ/EryC1 family.

This is Protein MT3510 from Mycobacterium tuberculosis (strain CDC 1551 / Oshkosh).